A 175-amino-acid polypeptide reads, in one-letter code: Inorganic pyrophosphatase (175 aa).

Positions 30, 44, and 56 each coordinate substrate. Aspartate 66, aspartate 71, and aspartate 103 together coordinate Mg(2+). Substrate is bound at residue tyrosine 142.

This sequence belongs to the PPase family. Homohexamer. Mg(2+) serves as cofactor.

The protein localises to the cytoplasm. The catalysed reaction is diphosphate + H2O = 2 phosphate + H(+). Functionally, catalyzes the hydrolysis of inorganic pyrophosphate (PPi) forming two phosphate ions. The protein is Inorganic pyrophosphatase of Ralstonia nicotianae (strain ATCC BAA-1114 / GMI1000) (Ralstonia solanacearum).